A 65-amino-acid chain; its full sequence is Large ribosomal subunit protein bL35 (65 aa).

Belongs to the bacterial ribosomal protein bL35 family.

The protein is Large ribosomal subunit protein bL35 of Phytoplasma mali (strain AT).